A 259-amino-acid chain; its full sequence is 3-methyl-2-oxobutanoate hydroxymethyltransferase (259 aa).

Mg(2+) is bound by residues Asp-44 and Asp-83. Residues 44–45 (DS), Asp-83, and Lys-113 contribute to the 3-methyl-2-oxobutanoate site. Glu-115 provides a ligand contact to Mg(2+). The active-site Proton acceptor is the Glu-183.

It belongs to the PanB family. As to quaternary structure, homodecamer; pentamer of dimers. Requires Mg(2+) as cofactor.

It is found in the cytoplasm. It carries out the reaction 3-methyl-2-oxobutanoate + (6R)-5,10-methylene-5,6,7,8-tetrahydrofolate + H2O = 2-dehydropantoate + (6S)-5,6,7,8-tetrahydrofolate. It functions in the pathway cofactor biosynthesis; (R)-pantothenate biosynthesis; (R)-pantoate from 3-methyl-2-oxobutanoate: step 1/2. Its function is as follows. Catalyzes the reversible reaction in which hydroxymethyl group from 5,10-methylenetetrahydrofolate is transferred onto alpha-ketoisovalerate to form ketopantoate. In Acaryochloris marina (strain MBIC 11017), this protein is 3-methyl-2-oxobutanoate hydroxymethyltransferase.